The primary structure comprises 133 residues: MTLKLCVLTPNRIVWDSEVKEIILSTNSGQIGILPNHAPIATAVDIGILRIRLNDQWVTMALMGGFARIGNNEITVLVNDAEKGSDIDSLEAQQTLEIAEANFRKAEGKRQTIEANLALRRARTRVEAINAIS.

The protein belongs to the ATPase epsilon chain family. In terms of assembly, F-type ATPases have 2 components, CF(1) - the catalytic core - and CF(0) - the membrane proton channel. CF(1) has five subunits: alpha(3), beta(3), gamma(1), delta(1), epsilon(1). CF(0) has three main subunits: a, b and c.

The protein localises to the plastid. It localises to the chloroplast thylakoid membrane. Produces ATP from ADP in the presence of a proton gradient across the membrane. The sequence is that of ATP synthase epsilon chain, chloroplastic from Ipomoea batatas (Sweet potato).